The chain runs to 346 residues: MQADILDGKQKRVNLNSKRLVNCNQVDVNQLVPIKYKWAWEHYLNGCANNWLPTEISMGKDIELWKSNVLSEDERRVILLNLGFFSTAESLVGNNIVLAIFKHVTNPEARQYLLRQAFEEAVHTHTFLYICESLGLDEKEIFNAYNERASIKAKDDFQMEITGKVLDPNFRTDSVEGLQEFIKNLVGYYIIMEGIFFYSGFVMILSFHRQNKMVGIGEQYQYILRDETIHLNFGVDLINGIKEENPEIWTTELQQEIIEMIQRAVDLEIDYARDCLPRGILGLRASMFIDYVQHIADRRLERIGLKPIYHTKNPFPWMSETIDLNKEKNFFETRVTEYQHAASLTW.

Fe cation contacts are provided by E89, E120, and H123. Y129 is a catalytic residue. Residues E193, E227, and H230 each contribute to the Fe cation site.

The protein belongs to the ribonucleoside diphosphate reductase small chain family. As to quaternary structure, tetramer of two alpha and two beta subunits. Requires Fe cation as cofactor.

It carries out the reaction a 2'-deoxyribonucleoside 5'-diphosphate + [thioredoxin]-disulfide + H2O = a ribonucleoside 5'-diphosphate + [thioredoxin]-dithiol. Its function is as follows. Provides the precursors necessary for DNA synthesis. Catalyzes the biosynthesis of deoxyribonucleotides from the corresponding ribonucleotides. The protein is Ribonucleoside-diphosphate reductase subunit beta (nrdB) of Chlamydia muridarum (strain MoPn / Nigg).